The following is a 523-amino-acid chain: Katanin p60 ATPase-containing subunit A1 (523 aa).

Positions 82–215 (KEAPTGRRAA…DGKSKRGLYE (134 aa)) are disordered. Low complexity predominate over residues 178 to 194 (AGARSSTAGKKGAASKS). 279 to 286 (GPPGTGKT) contributes to the ATP binding site.

Belongs to the AAA ATPase family. Katanin p60 subunit A1 subfamily. May homooligomerize. Component of KTN80-KTN1 complexes composed of a hexamer of KTN1-KTN80 heterodimers that sense microtubule (MT) geometry to confer precise MT severing. Interacts directly with KTN80.1, KTN80.2, KTN80.3 and KTN80.4. Can interact with KTN80.1. May interact with the kinesin related protein KIN14A. Interacts with microtubule polymers. Binds to IPGA1. As to expression, expressed ubiquitously, including siliques, flowers, leaves, stems and roots.

It localises to the cytoplasm. Its subcellular location is the cytoskeleton. It catalyses the reaction n ATP + n H2O + a microtubule = n ADP + n phosphate + (n+1) alpha/beta tubulin heterodimers.. In terms of biological role, severs microtubules in vitro in an ATP-dependent manner. Required for oligomerization of functional KTN80-KTN1 complexes that catalyze microtubule severing. This activity may promote rapid reorganization of cellular microtubule arrays. May be required for reorientation of cortical microtubule arrays during cellular elongation. Failure to correctly orient these arrays drastically compromises fiber length, cell wall thickness and mechanical strength. May also be required for the spatial organization of developmental cues within the root. Involved in the IPGA1- and AN-dependent regulation of pavement cells morphogenesis leading to puzzle shape. The sequence is that of Katanin p60 ATPase-containing subunit A1 from Arabidopsis thaliana (Mouse-ear cress).